A 105-amino-acid polypeptide reads, in one-letter code: Large ribosomal subunit protein bL21 (105 aa).

It belongs to the bacterial ribosomal protein bL21 family. Part of the 50S ribosomal subunit. Contacts protein L20.

Functionally, this protein binds to 23S rRNA in the presence of protein L20. In Rickettsia typhi (strain ATCC VR-144 / Wilmington), this protein is Large ribosomal subunit protein bL21.